A 440-amino-acid chain; its full sequence is MVLFSLVATHADIDLETVAQLSNGSSELASAALTDSSVVSGAVVLATCNRYEVYGETANGADLEAARSALVSQISELSGLNEQLVSRSFATHTGPDVTRHLFAVSAGLDSAVVGEREIAGQVRRALITAQQEGTASSGLVRLFQAASKTAKDVGAQTALGSRGLSIVSVALDLATDLAENDDWTTKKVVVFGTGAYAGATMSLLRERGCTDISVYSSSGRAEGFVATRGGTALDADTLPAAVAAADVMIGCSGSDNRVEAADLARVRANSGKPLIAIDLALTHDFDPAVGELDGVELLTLESVRLAAPQEQAESLSQASAIVNGAATSFESEREARSVDTAIVALRRHTMNVLDAEMEKVRARHGCTAAAEEVEFALRRMVKQLLHIPTVRARELAANGQQDDYVAALEALYGIQVEQPQAAAPASECPVDHEQLRSESA.

Substrate-binding positions include 47–50 (TCNR), serine 110, 115–117 (ERE), and glutamine 121. Cysteine 48 functions as the Nucleophile in the catalytic mechanism. 192–197 (GTGAYA) is a binding site for NADP(+).

It belongs to the glutamyl-tRNA reductase family. As to quaternary structure, homodimer.

It catalyses the reaction (S)-4-amino-5-oxopentanoate + tRNA(Glu) + NADP(+) = L-glutamyl-tRNA(Glu) + NADPH + H(+). The protein operates within porphyrin-containing compound metabolism; protoporphyrin-IX biosynthesis; 5-aminolevulinate from L-glutamyl-tRNA(Glu): step 1/2. Its function is as follows. Catalyzes the NADPH-dependent reduction of glutamyl-tRNA(Glu) to glutamate 1-semialdehyde (GSA). This Paenarthrobacter aurescens (strain TC1) protein is Glutamyl-tRNA reductase.